The primary structure comprises 359 residues: Protein RecA (359 aa).

Position 74 to 81 (74 to 81) interacts with ATP; sequence GPESSGKT.

This sequence belongs to the RecA family.

The protein localises to the cytoplasm. Functionally, can catalyze the hydrolysis of ATP in the presence of single-stranded DNA, the ATP-dependent uptake of single-stranded DNA by duplex DNA, and the ATP-dependent hybridization of homologous single-stranded DNAs. It interacts with LexA causing its activation and leading to its autocatalytic cleavage. This Anaplasma marginale (strain Florida) protein is Protein RecA.